A 429-amino-acid polypeptide reads, in one-letter code: UDP-N-acetylglucosamine 1-carboxyvinyltransferase (429 aa).

Lys-22–Asn-23 contacts phosphoenolpyruvate. UDP-N-acetyl-alpha-D-glucosamine is bound at residue Arg-102. Cys-126 acts as the Proton donor in catalysis. Residue Cys-126 is modified to 2-(S-cysteinyl)pyruvic acid O-phosphothioketal. UDP-N-acetyl-alpha-D-glucosamine is bound by residues Arg-131–Leu-135, Asp-316, and Ile-338.

It belongs to the EPSP synthase family. MurA subfamily.

The protein resides in the cytoplasm. It catalyses the reaction phosphoenolpyruvate + UDP-N-acetyl-alpha-D-glucosamine = UDP-N-acetyl-3-O-(1-carboxyvinyl)-alpha-D-glucosamine + phosphate. It functions in the pathway cell wall biogenesis; peptidoglycan biosynthesis. Cell wall formation. Adds enolpyruvyl to UDP-N-acetylglucosamine. The chain is UDP-N-acetylglucosamine 1-carboxyvinyltransferase from Methylobacterium radiotolerans (strain ATCC 27329 / DSM 1819 / JCM 2831 / NBRC 15690 / NCIMB 10815 / 0-1).